The following is a 1159-amino-acid chain: RAD51-associated protein 2 (1159 aa).

Positions 1–35 (MSLPQPTPRMAELRKPTSSLTPPEDPDSQPPSSKR) are disordered. An interaction with RAD51 region spans residues 1111-1159 (SHFPHGISRVRPLKTCSRPIRIGLSRKARIKQLHPYLKQMCYGNLKENF).

In terms of assembly, interacts with RAD51. As to expression, specifically expressed in meiotic tissues. Highly expressed in testis.

The chain is RAD51-associated protein 2 (RAD51AP2) from Homo sapiens (Human).